The chain runs to 328 residues: Phenylalanine--tRNA ligase alpha subunit (328 aa).

Residue E245 coordinates Mg(2+).

The protein belongs to the class-II aminoacyl-tRNA synthetase family. Phe-tRNA synthetase alpha subunit type 1 subfamily. Tetramer of two alpha and two beta subunits. Requires Mg(2+) as cofactor.

The protein localises to the cytoplasm. It catalyses the reaction tRNA(Phe) + L-phenylalanine + ATP = L-phenylalanyl-tRNA(Phe) + AMP + diphosphate + H(+). The sequence is that of Phenylalanine--tRNA ligase alpha subunit from Helicobacter pylori (strain Shi470).